Consider the following 334-residue polypeptide: Leukocyte cell-derived chemotaxin 1 (334 aa).

The chain crosses the membrane as a helical span at residues 46-66 (VVLISGAVLLLFGAIGAFYFW). One can recognise a BRICHOS domain in the interval 105–201 (GSGAEEAIEV…FCGDLPIFWL (97 aa)). Cysteine 132 and cysteine 193 are oxidised to a cystine. The propeptide occupies 211-214 (RERR). The segment at 212 to 268 (ERREVVRSSAPSTTRRPHSEPRGNAGPGRLSNRTRPSVQDDEEPFNPDNPYHQQEGE) is disordered. A glycan (N-linked (GlcNAc...) asparagine) is linked at asparagine 243. Disulfide bonds link cysteine 282–cysteine 286, cysteine 283–cysteine 323, cysteine 293–cysteine 317, and cysteine 297–cysteine 313.

It belongs to the chondromodulin-1 family. After cleavage, the post-translationally modified ChM-I is secreted as a glycoprotein. In terms of tissue distribution, detected in cartilage, cardiac valves and valvular interstitial cells (at protein level). Expressed in eye.

It is found in the secreted. It localises to the extracellular space. Its subcellular location is the extracellular matrix. The protein resides in the endomembrane system. Its function is as follows. Bifunctional growth regulator that stimulates the growth of cultured chondrocytes in the presence of basic fibroblast growth factor (FGF) but inhibits the growth of cultured vascular endothelial cells. May contribute to the rapid growth of cartilage and vascular invasion prior to the replacement of cartilage by bone during endochondral bone development. Inhibits in vitro tube formation and mobilization of endothelial cells. Plays a role as antiangiogenic factor in cardiac valves to suppress neovascularization. The polypeptide is Leukocyte cell-derived chemotaxin 1 (Rattus norvegicus (Rat)).